We begin with the raw amino-acid sequence, 485 residues long: Zinc finger protein 639 (485 aa).

Residues 1 to 14 (MNEYPKKRKRKTLH) show a composition bias toward basic residues. The disordered stretch occupies residues 1-20 (MNEYPKKRKRKTLHPSRYSD). Position 60 is a phosphoserine (S60). K76 is covalently cross-linked (Glycyl lysine isopeptide (Lys-Gly) (interchain with G-Cter in SUMO2)). Residue S88 is modified to Phosphoserine. Glycyl lysine isopeptide (Lys-Gly) (interchain with G-Cter in SUMO2) cross-links involve residues K177, K181, and K226. 8 consecutive C2H2-type zinc fingers follow at residues 204-227 (YKCE…ILKH), 233-255 (NVCR…AKLH), 260-283 (YICK…ADTH), 289-311 (YWCE…FQEH), 374-397 (FVCQ…AIEH), 403-425 (HVCD…LNSH), 431-454 (YLCQ…DFKH), and 460-482 (HKCS…LPVH). The interaction with CTNNA2 stretch occupies residues 371-455 (KNFFVCQVCG…LKIHLDFKHS (85 aa)).

Belongs to the krueppel C2H2-type zinc-finger protein family. In terms of assembly, interacts with CTNNA2.

The protein resides in the nucleus. In terms of biological role, binds DNA and may function as a transcriptional repressor. The protein is Zinc finger protein 639 (ZNF639) of Homo sapiens (Human).